Consider the following 204-residue polypeptide: Holliday junction branch migration complex subunit RuvA (204 aa).

The tract at residues 1 to 64 (MIGRLRGILL…EDAQLLYGFN (64 aa)) is domain I. The domain II stretch occupies residues 65–143 (TVKERALFRE…GWSAGDLFTP (79 aa)). A flexible linker region spans residues 144–155 (FTDAAPVDSGST). The domain III stretch occupies residues 156-204 (SSNSAEEEAVSALLALGYKPVQASKVVSQIAKPDMTSEQLIREALKSMV).

This sequence belongs to the RuvA family. As to quaternary structure, homotetramer. Forms an RuvA(8)-RuvB(12)-Holliday junction (HJ) complex. HJ DNA is sandwiched between 2 RuvA tetramers; dsDNA enters through RuvA and exits via RuvB. An RuvB hexamer assembles on each DNA strand where it exits the tetramer. Each RuvB hexamer is contacted by two RuvA subunits (via domain III) on 2 adjacent RuvB subunits; this complex drives branch migration. In the full resolvosome a probable DNA-RuvA(4)-RuvB(12)-RuvC(2) complex forms which resolves the HJ.

It localises to the cytoplasm. In terms of biological role, the RuvA-RuvB-RuvC complex processes Holliday junction (HJ) DNA during genetic recombination and DNA repair, while the RuvA-RuvB complex plays an important role in the rescue of blocked DNA replication forks via replication fork reversal (RFR). RuvA specifically binds to HJ cruciform DNA, conferring on it an open structure. The RuvB hexamer acts as an ATP-dependent pump, pulling dsDNA into and through the RuvAB complex. HJ branch migration allows RuvC to scan DNA until it finds its consensus sequence, where it cleaves and resolves the cruciform DNA. This is Holliday junction branch migration complex subunit RuvA from Vibrio vulnificus (strain CMCP6).